Consider the following 453-residue polypeptide: Cytochrome b-c1 complex subunit 2, mitochondrial (453 aa).

A mitochondrion-targeting transit peptide spans 1–14 (MKLLTRAGSFSRFY). Residues Lys66, Lys199, and Lys250 each carry the N6-acetyllysine modification.

It belongs to the peptidase M16 family. UQCRC2/QCR2 subfamily. As to quaternary structure, component of the ubiquinol-cytochrome c oxidoreductase (cytochrome b-c1 complex, complex III, CIII), a multisubunit enzyme composed of 11 subunits. The complex is composed of 3 respiratory subunits cytochrome b, cytochrome c1 and Rieske protein UQCRFS1, 2 core protein subunits UQCRC1/QCR1 and UQCRC2/QCR2, and 6 low-molecular weight protein subunits UQCRH/QCR6, UQCRB/QCR7, UQCRQ/QCR8, UQCR10/QCR9, UQCR11/QCR10 and subunit 9, the cleavage product of Rieske protein UQCRFS1. The complex exists as an obligatory dimer and forms supercomplexes (SCs) in the inner mitochondrial membrane with NADH-ubiquinone oxidoreductase (complex I, CI) and cytochrome c oxidase (complex IV, CIV), resulting in different assemblies (supercomplex SCI(1)III(2)IV(1) and megacomplex MCI(2)III(2)IV(2)). Interacts with RAB5IF. Interacts with STMP1.

Its subcellular location is the mitochondrion inner membrane. Component of the ubiquinol-cytochrome c oxidoreductase, a multisubunit transmembrane complex that is part of the mitochondrial electron transport chain which drives oxidative phosphorylation. The respiratory chain contains 3 multisubunit complexes succinate dehydrogenase (complex II, CII), ubiquinol-cytochrome c oxidoreductase (cytochrome b-c1 complex, complex III, CIII) and cytochrome c oxidase (complex IV, CIV), that cooperate to transfer electrons derived from NADH and succinate to molecular oxygen, creating an electrochemical gradient over the inner membrane that drives transmembrane transport and the ATP synthase. The cytochrome b-c1 complex catalyzes electron transfer from ubiquinol to cytochrome c, linking this redox reaction to translocation of protons across the mitochondrial inner membrane, with protons being carried across the membrane as hydrogens on the quinol. In the process called Q cycle, 2 protons are consumed from the matrix, 4 protons are released into the intermembrane space and 2 electrons are passed to cytochrome c. The 2 core subunits UQCRC1/QCR1 and UQCRC2/QCR2 are homologous to the 2 mitochondrial-processing peptidase (MPP) subunits beta-MPP and alpha-MPP respectively, and they seem to have preserved their MPP processing properties. May be involved in the in situ processing of UQCRFS1 into the mature Rieske protein and its mitochondrial targeting sequence (MTS)/subunit 9 when incorporated into complex III. The chain is Cytochrome b-c1 complex subunit 2, mitochondrial (UQCRC2) from Homo sapiens (Human).